Consider the following 485-residue polypeptide: GTPase Obg (485 aa).

The Obg domain maps to 2 to 159 (SKFIDRVVLH…RDLVLELKSV (158 aa)). A disordered region spans residues 64-84 (PHAKAGNGKPGEGGNRDGKMG). Residues 160–340 (ADVGLVGFPS…LTFALADLVR (181 aa)) form the OBG-type G domain. Residues 166-173 (GFPSAGKS), 191-195 (FTTLV), 212-215 (DVPG), 292-295 (NKTD), and 321-323 (SAV) each bind GTP. The Mg(2+) site is built by Ser173 and Thr193. Residues 358-438 (PIAVDESGFT…IGDVTFDWEP (81 aa)) enclose the OCT domain. The span at 457 to 469 (LEQSDRVSAAERK) shows a compositional bias: basic and acidic residues. Residues 457–485 (LEQSDRVSAAERKHASRVRRGLVEDDEQR) are disordered.

This sequence belongs to the TRAFAC class OBG-HflX-like GTPase superfamily. OBG GTPase family. As to quaternary structure, monomer. Mg(2+) is required as a cofactor.

It is found in the cytoplasm. An essential GTPase which binds GTP, GDP and possibly (p)ppGpp with moderate affinity, with high nucleotide exchange rates and a fairly low GTP hydrolysis rate. Plays a role in control of the cell cycle, stress response, ribosome biogenesis and in those bacteria that undergo differentiation, in morphogenesis control. The sequence is that of GTPase Obg from Nocardia farcinica (strain IFM 10152).